A 227-amino-acid chain; its full sequence is MKFAVIVFPGSNCDVDMFHAIKDELGEDVDYVWHDAENLDEYDAILLPGGFSYGDYLRCGAISRFANAMKAVQKAAEQGKPILGVCNGFQILVESGLLPGVLIRNQNLKFMCRTVPLRVENNETMFTSQYNKGEIIHIPIAHGEGNYYCDEATLKKLEQKNQIVFRYVDNPNGSVSDIAGIVNEKGNVLGMMPHPERAVNEILGGAEGLKVFQSILKYWRETYVVNA.

Residues 3 to 225 form the Glutamine amidotransferase type-1 domain; the sequence is FAVIVFPGSN…LKYWRETYVV (223 aa). Catalysis depends on cysteine 86, which acts as the Nucleophile. Catalysis depends on residues histidine 194 and glutamate 196.

In terms of assembly, part of the FGAM synthase complex composed of 1 PurL, 1 PurQ and 2 PurS subunits.

The protein resides in the cytoplasm. It carries out the reaction N(2)-formyl-N(1)-(5-phospho-beta-D-ribosyl)glycinamide + L-glutamine + ATP + H2O = 2-formamido-N(1)-(5-O-phospho-beta-D-ribosyl)acetamidine + L-glutamate + ADP + phosphate + H(+). The catalysed reaction is L-glutamine + H2O = L-glutamate + NH4(+). It functions in the pathway purine metabolism; IMP biosynthesis via de novo pathway; 5-amino-1-(5-phospho-D-ribosyl)imidazole from N(2)-formyl-N(1)-(5-phospho-D-ribosyl)glycinamide: step 1/2. Functionally, part of the phosphoribosylformylglycinamidine synthase complex involved in the purines biosynthetic pathway. Catalyzes the ATP-dependent conversion of formylglycinamide ribonucleotide (FGAR) and glutamine to yield formylglycinamidine ribonucleotide (FGAM) and glutamate. The FGAM synthase complex is composed of three subunits. PurQ produces an ammonia molecule by converting glutamine to glutamate. PurL transfers the ammonia molecule to FGAR to form FGAM in an ATP-dependent manner. PurS interacts with PurQ and PurL and is thought to assist in the transfer of the ammonia molecule from PurQ to PurL. The polypeptide is Phosphoribosylformylglycinamidine synthase subunit PurQ (Bacillus cytotoxicus (strain DSM 22905 / CIP 110041 / 391-98 / NVH 391-98)).